A 322-amino-acid chain; its full sequence is Transcription factor Atoh8 (322 aa).

Disordered regions lie at residues 77-96, 101-144, and 159-221; these read PVPASVAPAVPPGGGTDTAR, IRAP…EAHS, and PPAR…ATAA. Basic and acidic residues predominate over residues 101–111; the sequence is IRAPEVSDARK. A basic motif; degenerate region spans residues 231-244; sequence TRRLLANARERTRV. One can recognise a bHLH domain in the interval 231 to 283; the sequence is TRRLLANARERTRVHTISAAFEALRKQVPCYSYGQKLSKLAILRIACNYILSL. The segment at 245-283 is helix-loop-helix motif; it reads HTISAAFEALRKQVPCYSYGQKLSKLAILRIACNYILSL.

Efficient DNA binding requires dimerization with another bHLH protein. Interacts with NEUROG3 and NEUROD1. Interacts with ZFPM2; mediates indirect interaction with GATA4. Forms a heterodimer with TCF3; repress transcription of TCF3 and TCF3/NEUROG3 dimer-induced transactivation of E box-dependent promoters. As to expression, expressed by subsets of mature neurons. Expressed in kidney (podocytes). Expression is restricted to the atria, lung mesenchyme, and vascular smooth muscle.

The protein resides in the nucleus. Its subcellular location is the nucleus speckle. It localises to the cytoplasm. Functionally, transcription factor that binds a palindromic (canonical) core consensus DNA sequence 5'-CANNTG- 3' known as an E-box element, possibly as a heterodimer with other bHLH proteins. Regulates endothelial cell proliferation, migration and tube-like structures formation. Modulates endothelial cell differentiation through NOS3. May be implicated in specification and differentiation of neuronal cell lineages in the brain. May participate in kidney development and may be involved in podocyte differentiation. During early embryonic development is involved in tissue-specific differentiation processes that are dependent on class II bHLH factors and namely modulates the differentiation program initiated by the pro-endocrine factor NEUROG3. During myogenesis, may play a role during the transition of myoblasts from the proliferative phase to the differentiation phase. Positively regulates HAMP transcription in two ways, firstly by acting directly on the HAMP promoter via E-boxes binding and indirectly through increased phosphorylation of SMAD protein complex. Repress NEUROG3-dependent gene activation in a gene-specific manner through at least two mechanisms; requires only either the sequestering of a general partner such as TCF3 through heterodimerization, either also requires binding of the bHLH domain to DNA via a basic motif. In Mus musculus (Mouse), this protein is Transcription factor Atoh8.